The sequence spans 170 residues: Translocon-associated protein subunit gamma (170 aa).

Residues 1 to 24 (MAEVDEFSAFRHENDVSIEQRIVY) lie on the Lumenal side of the membrane. The helical transmembrane segment at 25 to 45 (FINSLIVALVPVYLYHAIFFM) threads the bilayer. The Cytoplasmic portion of the chain corresponds to 46 to 51 (SIDDHM). The chain crosses the membrane as a helical span at residues 52–72 (IIYGSVTLFAAIVLTFAYNNI). Residues 73–121 (YRMKRLKLSASREHISIASKNKVGDKKKFAAAQKEVQALVTSHEAIAAS) lie on the Lumenal side of the membrane. Residues 122 to 141 (IMYNNAVFLICVSIFSFIIF) traverse the membrane as a helical segment. Over 142 to 145 (KNVP) the chain is Cytoplasmic. A helical membrane pass occupies residues 146 to 168 (LVYNYIISISLGAGLTSFLSTSS).

Belongs to the TRAP-gamma family. In terms of assembly, heterotrimer of TRAP-alpha, TRAP-beta and TRAP-gamma.

It localises to the endoplasmic reticulum membrane. TRAP proteins are part of a complex whose function is to bind calcium to the ER membrane and thereby regulate the retention of ER resident proteins. This is Translocon-associated protein subunit gamma (ssr3) from Dictyostelium discoideum (Social amoeba).